Here is a 212-residue protein sequence, read N- to C-terminus: Glycerol-3-phosphate acyltransferase (212 aa).

The next 6 helical transmembrane spans lie at 8–28, 59–79, 90–110, 122–142, 148–168, and 169–189; these read IFLS…PFAV, AAAA…LWLA, VFAL…FLGF, ILLA…VIIA, SSLA…FGSG, and VAWY…LLLF.

This sequence belongs to the PlsY family. As to quaternary structure, probably interacts with PlsX.

The protein localises to the cell inner membrane. It catalyses the reaction an acyl phosphate + sn-glycerol 3-phosphate = a 1-acyl-sn-glycero-3-phosphate + phosphate. Its pathway is lipid metabolism; phospholipid metabolism. Catalyzes the transfer of an acyl group from acyl-phosphate (acyl-PO(4)) to glycerol-3-phosphate (G3P) to form lysophosphatidic acid (LPA). This enzyme utilizes acyl-phosphate as fatty acyl donor, but not acyl-CoA or acyl-ACP. This Bordetella petrii (strain ATCC BAA-461 / DSM 12804 / CCUG 43448) protein is Glycerol-3-phosphate acyltransferase.